Consider the following 365-residue polypeptide: MMKEEQWAPVIVMLISSVAMGSVNALVKKALDVGVNHMIFGAYRMAISALILVPFSYIWERKTRPQLTFMLLCEHFISGLLGASLMQFFFLLGLSYTSATVSMALVSMLPAITFALALIFRIENAQNLKSKAGVLKVMGTLICIMGAMLLTFYKGPELSNPHSHPQARHNNNNNNGHDQTKKWLLGCLYLVIGTVLLSLWMLFQGKLSFKYPGNKYSSTCLMSVFASFQCAILSLYKSRDVKDWIIEDKFVILVTLYAGIVGQAMSTVVTSWSIKMTGAVFVSTFSPVSLVAATLFDFLILHSPLYLGSILGSVVTITGLYVFLWGRKNETDQSVSKTLNSSQFSQNKDNEDHTIANHKDTNLPV.

The next 10 membrane-spanning stretches (helical) occupy residues 7-27 (WAPV…NALV), 39-59 (IFGA…SYIW), 76-96 (FISG…GLSY), 100-120 (TVSM…ALIF), 132-152 (AGVL…LLTF), 183-203 (WLLG…WMLF), 216-236 (YSST…LSLY), 250-270 (FVIL…TVVT), 280-300 (VFVS…DFLI), and 305-325 (LYLG…VFLW). In terms of domain architecture, EamA 1 spans 20–151 (MGSVNALVKK…ICIMGAMLLT (132 aa)). Positions 216–324 (YSSTCLMSVF…VTITGLYVFL (109 aa)) constitute an EamA 2 domain. The interval 339 to 365 (LNSSQFSQNKDNEDHTIANHKDTNLPV) is disordered. A compositionally biased stretch (basic and acidic residues) spans 348-365 (KDNEDHTIANHKDTNLPV).

Belongs to the drug/metabolite transporter (DMT) superfamily. Plant drug/metabolite exporter (P-DME) (TC 2.A.7.4) family.

The protein localises to the membrane. This chain is WAT1-related protein At4g01430, found in Arabidopsis thaliana (Mouse-ear cress).